We begin with the raw amino-acid sequence, 206 residues long: Pyridoxine/pyridoxamine 5'-phosphate oxidase (206 aa).

FMN contacts are provided by residues 55 to 60 (RVVLLK), 70 to 71 (YT), Arg-76, Lys-77, and Gln-99. Substrate is bound at residue Lys-60. Substrate-binding residues include Tyr-117, Arg-121, and Ser-125. FMN contacts are provided by residues 134–135 (QS) and Trp-179. 185–187 (RLH) contacts substrate. Position 189 (Arg-189) interacts with FMN.

The protein belongs to the pyridoxamine 5'-phosphate oxidase family. As to quaternary structure, homodimer. The cofactor is FMN.

The enzyme catalyses pyridoxamine 5'-phosphate + O2 + H2O = pyridoxal 5'-phosphate + H2O2 + NH4(+). The catalysed reaction is pyridoxine 5'-phosphate + O2 = pyridoxal 5'-phosphate + H2O2. Its pathway is cofactor metabolism; pyridoxal 5'-phosphate salvage; pyridoxal 5'-phosphate from pyridoxamine 5'-phosphate: step 1/1. It functions in the pathway cofactor metabolism; pyridoxal 5'-phosphate salvage; pyridoxal 5'-phosphate from pyridoxine 5'-phosphate: step 1/1. Catalyzes the oxidation of either pyridoxine 5'-phosphate (PNP) or pyridoxamine 5'-phosphate (PMP) into pyridoxal 5'-phosphate (PLP). The sequence is that of Pyridoxine/pyridoxamine 5'-phosphate oxidase from Myxococcus xanthus (strain DK1622).